Here is a 317-residue protein sequence, read N- to C-terminus: Ribosomal protein L11 methyltransferase (317 aa).

Residues threonine 158, glycine 179, aspartate 201, and asparagine 244 each contribute to the S-adenosyl-L-methionine site.

It belongs to the methyltransferase superfamily. PrmA family.

The protein localises to the cytoplasm. It carries out the reaction L-lysyl-[protein] + 3 S-adenosyl-L-methionine = N(6),N(6),N(6)-trimethyl-L-lysyl-[protein] + 3 S-adenosyl-L-homocysteine + 3 H(+). Methylates ribosomal protein L11. The chain is Ribosomal protein L11 methyltransferase from Streptococcus agalactiae serotype III (strain NEM316).